We begin with the raw amino-acid sequence, 183 residues long: MSTQDSAKITTVEHRRNIYLVGLMGAGKTTVGRQLARRLSRPFFDTDHEIVERTGVPIPTIFEIEGEEGFRRREAQTIYDLTAENNIVLATGGGVVINPENRRRLHDTGWVVYLNVSPVLLYERTRHDRNRPLLRVEDPLAKLEELHSIRDPLYREVAHIVVDGSHLVASGIVQYLLREFNRL.

25–30 (GAGKTT) is an ATP binding site. Thr29 lines the Mg(2+) pocket. Residues Asp47, Arg71, and Gly93 each contribute to the substrate site. Arg131 is a binding site for ATP. Arg150 is a substrate binding site.

The protein belongs to the shikimate kinase family. Monomer. Mg(2+) is required as a cofactor.

It is found in the cytoplasm. The catalysed reaction is shikimate + ATP = 3-phosphoshikimate + ADP + H(+). It participates in metabolic intermediate biosynthesis; chorismate biosynthesis; chorismate from D-erythrose 4-phosphate and phosphoenolpyruvate: step 5/7. Functionally, catalyzes the specific phosphorylation of the 3-hydroxyl group of shikimic acid using ATP as a cosubstrate. This chain is Shikimate kinase, found in Dechloromonas aromatica (strain RCB).